The primary structure comprises 1957 residues: Chromatin modification-related protein EAF1 A (1957 aa).

Disordered stretches follow at residues 108–208 (ASPH…TDLV), 261–287 (NRVS…GSKT), 323–373 (GGSP…SHAN), and 449–469 (NQSH…ETEK). Over residues 140–151 (SENKSVEGERNL) the composition is skewed to basic and acidic residues. Composition is skewed to polar residues over residues 261 to 270 (NRVSSNSLNT), 333 to 342 (GQKNSSTQLN), and 355 to 372 (TNRG…SSHA). In terms of domain architecture, HSA spans 563-641 (CGTAPVEVRE…LSNAILQFWS (79 aa)). Disordered regions lie at residues 833–909 (GSNS…AVQK) and 928–950 (AETS…DQTW). The segment covering 884-898 (TDASSGDTSSFQDEY) has biased composition (polar residues). The SANT domain maps to 1049–1105 (SGNPWSLFEDQALVVLVHDMGPNWELISDAMNSTLKIKCIYRNPTECKDRHKILMDK). 7 disordered regions span residues 1107-1131 (AGDG…PGIP), 1282-1314 (TPVL…GLQS), 1344-1367 (LSGR…DRGH), 1449-1644 (QGNS…QQLN), 1687-1768 (PVRP…IAPA), 1804-1840 (ELSK…PQAS), and 1876-1957 (SSNT…TKVE). 6 stretches are compositionally biased toward polar residues: residues 1116–1125 (DSGNSQSYPS), 1290–1314 (AHPS…GLQS), 1344–1358 (LSGR…STPA), 1459–1472 (SNLS…TTPV), 1479–1492 (LSQQ…SHVL), and 1501–1510 (QSPSQATGAQ). 2 stretches are compositionally biased toward low complexity: residues 1523–1534 (QRYLQQQQQQQQ) and 1545–1562 (VQQP…NSPQ). Positions 1563–1579 (TQPPVSPQPLSMPPVSP) are enriched in pro residues. Composition is skewed to polar residues over residues 1582–1595 (NINA…QKSQ), 1604–1618 (SPQS…QAGK), 1635–1644 (RQPTQGQQLN), 1691–1722 (DQQS…QQLP), and 1734–1758 (QQQM…CNIL). The segment covering 1759 to 1768 (STSSPSIAPA) has biased composition (low complexity). Positions 1805–1815 (LSKKSQAERMP) are enriched in basic and acidic residues. Composition is skewed to polar residues over residues 1819-1832 (QSVT…SMGT) and 1876-1894 (SSNT…NQGL). Basic and acidic residues-rich tracts occupy residues 1913–1922 (SEEKRPKLPE) and 1932–1942 (LASEEQPHLEE).

The protein belongs to the EAF1 family. As to quaternary structure, component of the NuA4 histone acetyltransferase complex. Interacts with ARP4 and SWC4, and (via HSA domain) with TAF14 and TAF14B. Expressed in leaves.

It is found in the nucleus. Component of the NuA4 histone acetyltransferase complex which is involved in transcriptional activation of selected genes principally by acetylation of nucleosomal histone H4 and H2A. The chain is Chromatin modification-related protein EAF1 A (EAF1A) from Arabidopsis thaliana (Mouse-ear cress).